The primary structure comprises 88 residues: uncharacterized protein (88 aa).

It is found in the host cytoplasm. This is an uncharacterized protein from Escherichia phage Mu (Bacteriophage Mu).